The sequence spans 213 residues: Orotate phosphoribosyltransferase (213 aa).

K26 serves as a coordination point for 5-phospho-alpha-D-ribose 1-diphosphate. 34–35 (FF) lines the orotate pocket. 5-phospho-alpha-D-ribose 1-diphosphate is bound by residues 72–73 (YK), R99, K100, K103, H105, and 124–132 (DDVITAGTA). 2 residues coordinate orotate: T128 and R156.

Belongs to the purine/pyrimidine phosphoribosyltransferase family. PyrE subfamily. Homodimer. Requires Mg(2+) as cofactor.

The catalysed reaction is orotidine 5'-phosphate + diphosphate = orotate + 5-phospho-alpha-D-ribose 1-diphosphate. It participates in pyrimidine metabolism; UMP biosynthesis via de novo pathway; UMP from orotate: step 1/2. Functionally, catalyzes the transfer of a ribosyl phosphate group from 5-phosphoribose 1-diphosphate to orotate, leading to the formation of orotidine monophosphate (OMP). This chain is Orotate phosphoribosyltransferase, found in Thioalkalivibrio sulfidiphilus (strain HL-EbGR7).